The sequence spans 491 residues: MYKILFATSEAHPLIKTGGLGDVAGILPIELARLGLEAGIILPAYPACKTHLKNLKEVARLRLPAALEPVRILKGQLLEGPNPVWLVDSPAHFDRPGNPYLNEQGQDWPDNAARFTTFCRAVATLANSPEFDWQPDLIHCNDWQTGLIPPFLAPLRSRPATLFTIHNLAYQGVFSRQQFDALELPSAWWSPAALEFYNQISFIKGGLVFADWLTTVSPTYAKEILTPEFGCGLDGVLRGRSKRLTGILNGADYQRWDPRHDPFIEKRYDQTCWSHKASNKLALQRRYGLPEDDTLPVLGFVGRLVEQKGIDLILGALPKLLAEKIQVVFLGEGEERHQNALQQLASRYPNQIGVSISYDERLAHGVQAGADIFLMPSRFEPCGLTQLYALRYGTVPIARRTGGLSDTIVDATEKNLRQELATGFTFTESSPSALLTAIQRALACYAQSRQWRRLALTGMAQNFSWQTSAKAYFDLYQQLVSQEFSCKNNVL.

Lys-16 contributes to the ADP-alpha-D-glucose binding site.

This sequence belongs to the glycosyltransferase 1 family. Bacterial/plant glycogen synthase subfamily.

The enzyme catalyses [(1-&gt;4)-alpha-D-glucosyl](n) + ADP-alpha-D-glucose = [(1-&gt;4)-alpha-D-glucosyl](n+1) + ADP + H(+). The protein operates within glycan biosynthesis; glycogen biosynthesis. Its function is as follows. Synthesizes alpha-1,4-glucan chains using ADP-glucose. This is Glycogen synthase 2 from Nitrosococcus oceani (strain ATCC 19707 / BCRC 17464 / JCM 30415 / NCIMB 11848 / C-107).